A 442-amino-acid polypeptide reads, in one-letter code: Meiotically up-regulated gene 191 protein (442 aa).

T361 carries the post-translational modification Phosphothreonine. The span at 416-429 (RNNPSSGESTTLPQ) shows a compositional bias: polar residues. Residues 416–442 (RNNPSSGESTTLPQPSHGKKDKDCVIS) form a disordered region. The span at 433–442 (GKKDKDCVIS) shows a compositional bias: basic and acidic residues.

It is found in the cytoplasm. Its subcellular location is the nucleus. Its function is as follows. Has a role in meiosis. In Schizosaccharomyces pombe (strain 972 / ATCC 24843) (Fission yeast), this protein is Meiotically up-regulated gene 191 protein (mug191).